A 126-amino-acid polypeptide reads, in one-letter code: Bactofilin BacO (126 aa).

Belongs to the bactofilin family. In terms of assembly, interacts with BacN and probably also BacP, the 3 proteins colocalize as an extended structure. Interacts with PadC.

The protein resides in the cytoplasm. Its subcellular location is the cytoskeleton. A non-essential component of the chromosome segregation machinery. Positions the ParA-ParB-parS chromosome segregation machinery within the cell; BacP seems to be the most important bactofilin in this process. Forms a heteropolymeric, subpolar scaffold in the cell; BacP probably forms the core, BacO contributes to position and integrity while BacN does not seem to contribute to assembly. The polypeptide is Bactofilin BacO (Myxococcus xanthus (strain DK1622)).